The following is a 248-amino-acid chain: 5'-nucleotidase SurE (248 aa).

D8, D9, S39, and N91 together coordinate a divalent metal cation.

The protein belongs to the SurE nucleotidase family. It depends on a divalent metal cation as a cofactor.

The protein localises to the cytoplasm. It catalyses the reaction a ribonucleoside 5'-phosphate + H2O = a ribonucleoside + phosphate. In terms of biological role, nucleotidase that shows phosphatase activity on nucleoside 5'-monophosphates. The protein is 5'-nucleotidase SurE of Geotalea daltonii (strain DSM 22248 / JCM 15807 / FRC-32) (Geobacter daltonii).